The chain runs to 281 residues: 2-dehydro-3-deoxyphosphooctonate aldolase (281 aa).

The protein belongs to the KdsA family.

It localises to the cytoplasm. It catalyses the reaction D-arabinose 5-phosphate + phosphoenolpyruvate + H2O = 3-deoxy-alpha-D-manno-2-octulosonate-8-phosphate + phosphate. Its pathway is carbohydrate biosynthesis; 3-deoxy-D-manno-octulosonate biosynthesis; 3-deoxy-D-manno-octulosonate from D-ribulose 5-phosphate: step 2/3. It participates in bacterial outer membrane biogenesis; lipopolysaccharide biosynthesis. This chain is 2-dehydro-3-deoxyphosphooctonate aldolase, found in Hahella chejuensis (strain KCTC 2396).